Reading from the N-terminus, the 71-residue chain is Ranatuerin-2P (71 aa).

Residues 1–20 form the signal peptide; that stretch reads MFTMKKSLLLFFFLGTISLS. Positions 21–44 are excised as a propeptide; sequence LCEQERGADEDDGVEITEEEVKRG. An intrachain disulfide couples cysteine 66 to cysteine 71.

Expressed by the skin glands.

It localises to the secreted. Functionally, antibacterial activity against Gram-positive bacterium S.aureus and Gram-negative bacterium E.coli. Has activity against C.albicans. The sequence is that of Ranatuerin-2P from Lithobates pipiens (Northern leopard frog).